The primary structure comprises 531 residues: CTP synthase (531 aa).

Positions 1-267 (MTKYIIITGG…ASKILSKLNL (267 aa)) are amidoligase domain. CTP is bound at residue Ser-13. Ser-13 is a binding site for UTP. 14–19 (SVGKGT) serves as a coordination point for ATP. Tyr-54 is a binding site for L-glutamine. An ATP-binding site is contributed by Asp-71. Residues Asp-71 and Glu-141 each coordinate Mg(2+). Residues 148 to 150 (DIE), 188 to 193 (KTKPLQ), and Lys-224 contribute to the CTP site. UTP is bound by residues 188-193 (KTKPLQ) and Lys-224. The Glutamine amidotransferase type-1 domain maps to 292 to 531 (KIALVGKYTK…IGFLRAAAGV (240 aa)). Gly-355 provides a ligand contact to L-glutamine. The active-site Nucleophile; for glutamine hydrolysis is the Cys-382. L-glutamine contacts are provided by residues 383-386 (YGMQ), Glu-406, and Arg-463. Catalysis depends on residues His-507 and Glu-509.

It belongs to the CTP synthase family. Homotetramer.

It carries out the reaction UTP + L-glutamine + ATP + H2O = CTP + L-glutamate + ADP + phosphate + 2 H(+). The catalysed reaction is L-glutamine + H2O = L-glutamate + NH4(+). It catalyses the reaction UTP + NH4(+) + ATP = CTP + ADP + phosphate + 2 H(+). It participates in pyrimidine metabolism; CTP biosynthesis via de novo pathway; CTP from UDP: step 2/2. With respect to regulation, allosterically activated by GTP, when glutamine is the substrate; GTP has no effect on the reaction when ammonia is the substrate. The allosteric effector GTP functions by stabilizing the protein conformation that binds the tetrahedral intermediate(s) formed during glutamine hydrolysis. Inhibited by the product CTP, via allosteric rather than competitive inhibition. Catalyzes the ATP-dependent amination of UTP to CTP with either L-glutamine or ammonia as the source of nitrogen. Regulates intracellular CTP levels through interactions with the four ribonucleotide triphosphates. This Sulfurisphaera tokodaii (strain DSM 16993 / JCM 10545 / NBRC 100140 / 7) (Sulfolobus tokodaii) protein is CTP synthase.